The chain runs to 421 residues: Ribosomal RNA large subunit methyltransferase G (421 aa).

Residues 389-421 (EPELEQESDLNSKLDANTEVPHPQSALYGKPKA) are disordered.

The protein belongs to the methyltransferase superfamily. RlmG family.

It localises to the cytoplasm. The catalysed reaction is guanosine(1835) in 23S rRNA + S-adenosyl-L-methionine = N(2)-methylguanosine(1835) in 23S rRNA + S-adenosyl-L-homocysteine + H(+). Specifically methylates the guanine in position 1835 (m2G1835) of 23S rRNA. This chain is Ribosomal RNA large subunit methyltransferase G, found in Shewanella halifaxensis (strain HAW-EB4).